The primary structure comprises 306 residues: MPNPLYRQHIISISDLSREQLECLLQTALKLKAHPRGDLLEGKLIGSCFFEPSTRTRLSFETAVQRLGGKVIGFSDGANTSAKKGETLADTARIISGYTDAIIQRHPKDGAARVAAEFSRVPVINAGDGTNQHPSQTLLDLVTIYETQGRLDKLKIAMAGDLKYGRTVHSLCQALKRWGCEFAFVSPPSLAMPDYITEELDEAGCRYRILGSLEEAAEWADILYMTRVQRERFDEQEFAKIQGKFNLDASMLARAKPNLRVLHPLPRVDEIHPDVDATPHAYYFEQATNGVYARMAILSLVLNEEV.

Carbamoyl phosphate contacts are provided by Arg55 and Thr56. Lys84 is a binding site for L-aspartate. The carbamoyl phosphate site is built by Arg105, His133, and Gln136. Positions 166 and 227 each coordinate L-aspartate. Leu265 and Pro266 together coordinate carbamoyl phosphate.

The protein belongs to the aspartate/ornithine carbamoyltransferase superfamily. ATCase family. As to quaternary structure, heterododecamer (2C3:3R2) of six catalytic PyrB chains organized as two trimers (C3), and six regulatory PyrI chains organized as three dimers (R2).

The enzyme catalyses carbamoyl phosphate + L-aspartate = N-carbamoyl-L-aspartate + phosphate + H(+). It participates in pyrimidine metabolism; UMP biosynthesis via de novo pathway; (S)-dihydroorotate from bicarbonate: step 2/3. Its function is as follows. Catalyzes the condensation of carbamoyl phosphate and aspartate to form carbamoyl aspartate and inorganic phosphate, the committed step in the de novo pyrimidine nucleotide biosynthesis pathway. This Neisseria meningitidis serogroup C / serotype 2a (strain ATCC 700532 / DSM 15464 / FAM18) protein is Aspartate carbamoyltransferase catalytic subunit.